The sequence spans 818 residues: Dapper 1-A (818 aa).

Residues 1–10 are compositionally biased toward pro residues; it reads MKPIPSPEPP. 5 disordered regions span residues 1 to 30, 60 to 80, 122 to 144, 455 to 486, and 510 to 530; these read MKPI…WERH, VLSP…PRSD, IDSE…LSDG, NVTP…SALL, and ESSS…SSSQ. Residues 1-337 form an interaction with tcf7l1-A region; that stretch reads MKPIPSPEPP…PVRTNKPRTS (337 aa). Residues 21 to 30 are compositionally biased toward basic and acidic residues; sequence DKGEAEWERH. Residues 79–130 are a coiled coil; that stretch reads SDEQKLLEENISLLKKQLNCLRKRDAGLLSQLHELDKQINDLKIDSEKTEET. A compositionally biased stretch (basic and acidic residues) spans 122–132; sequence IDSEKTEETDS. Over residues 455 to 485 the composition is skewed to polar residues; that stretch reads NVTPNAPANLPNASSSVCNGSPRESTQNSAL. Residues 512-524 show a composition bias toward basic and acidic residues; it reads SSFEERPPLDFKS. Residues 815 to 818 carry the PDZ-binding motif; it reads MTTV.

This sequence belongs to the dapper family. In terms of assembly, interacts with dbf4 and tcf7l1-A. Interacts with dvl2/dsh via the C-terminus. In terms of tissue distribution, expressed in the animal and dorsal marginal regions at late blastula and early gastrula stages. Expressed predominantly in the anterior neural plate at neurulation. Expressed mainly in the ectodermal placodes, including the eye anlagen and the otic vesicle, at later stages of development.

The protein localises to the cytoplasm. It is found in the nucleus. Its function is as follows. Involved in regulation of intracellular signaling pathways during development. Specifically thought to play a role in canonical and/or non-canonical Wnt signaling pathways through interaction with DSH (Dishevelled) family proteins. Binds to dvl2/dsh and impedes the degradation of beta-catenin (ctnnb1-A and possibly ctnnb1-B), thereby enhancing the transcriptional activation of target genes of the Wnt signaling pathway. Also promotes catenin delta/ctnnd1 stability which in turn promotes zbtb33/kaiso sequestration and thus is involved in the regulation of zbtb33/kaiso-mediated transcriptional repression. May also bind to and directly stimulate the transcriptional activity of tcf7l1-A. Required for eye development and neural patterning. In Xenopus laevis (African clawed frog), this protein is Dapper 1-A (dact1-a).